Reading from the N-terminus, the 754-residue chain is 5-methyltetrahydropteroyltriglutamate--homocysteine methyltransferase (754 aa).

5-methyltetrahydropteroyltri-L-glutamate is bound by residues 15-18 and Lys114; that span reads RELK. L-homocysteine is bound by residues 430 to 432 and Glu483; that span reads IGS. Residues 430–432 and Glu483 contribute to the L-methionine site; that span reads IGS. 5-methyltetrahydropteroyltri-L-glutamate contacts are provided by residues 514 to 515 and Trp560; that span reads RC. An L-homocysteine-binding site is contributed by Asp598. Asp598 lines the L-methionine pocket. Glu604 is a binding site for 5-methyltetrahydropteroyltri-L-glutamate. 3 residues coordinate Zn(2+): His641, Cys643, and Glu665. His694 acts as the Proton donor in catalysis. Cys726 contributes to the Zn(2+) binding site.

Belongs to the vitamin-B12 independent methionine synthase family. Zn(2+) is required as a cofactor.

It catalyses the reaction 5-methyltetrahydropteroyltri-L-glutamate + L-homocysteine = tetrahydropteroyltri-L-glutamate + L-methionine. The protein operates within amino-acid biosynthesis; L-methionine biosynthesis via de novo pathway; L-methionine from L-homocysteine (MetE route): step 1/1. Functionally, catalyzes the transfer of a methyl group from 5-methyltetrahydrofolate to homocysteine resulting in methionine formation. The polypeptide is 5-methyltetrahydropteroyltriglutamate--homocysteine methyltransferase (Campylobacter jejuni subsp. jejuni serotype O:2 (strain ATCC 700819 / NCTC 11168)).